Here is a 336-residue protein sequence, read N- to C-terminus: Glycerol-3-phosphate dehydrogenase [NAD(P)+] (336 aa).

4 residues coordinate NADPH: Ser-16, Tyr-17, His-37, and Lys-111. Sn-glycerol 3-phosphate is bound by residues Lys-111, Gly-140, and Thr-142. Ala-144 contributes to the NADPH binding site. Residues Lys-196, Asp-249, Ser-259, Arg-260, and Asn-261 each coordinate sn-glycerol 3-phosphate. Residue Lys-196 is the Proton acceptor of the active site. Arg-260 contributes to the NADPH binding site. Residues Val-284 and Glu-286 each coordinate NADPH.

Belongs to the NAD-dependent glycerol-3-phosphate dehydrogenase family.

It localises to the cytoplasm. It carries out the reaction sn-glycerol 3-phosphate + NAD(+) = dihydroxyacetone phosphate + NADH + H(+). The catalysed reaction is sn-glycerol 3-phosphate + NADP(+) = dihydroxyacetone phosphate + NADPH + H(+). It functions in the pathway membrane lipid metabolism; glycerophospholipid metabolism. Its function is as follows. Catalyzes the reduction of the glycolytic intermediate dihydroxyacetone phosphate (DHAP) to sn-glycerol 3-phosphate (G3P), the key precursor for phospholipid synthesis. This chain is Glycerol-3-phosphate dehydrogenase [NAD(P)+], found in Haemophilus ducreyi (strain 35000HP / ATCC 700724).